Reading from the N-terminus, the 755-residue chain is Putative two-component response regulator-like APRR6 (755 aa).

The region spanning 14–128 (SILLIDHDTA…DIKNMWQHVF (115 aa)) is the Response regulatory domain.

It belongs to the ARR-like family.

It localises to the nucleus. This chain is Putative two-component response regulator-like APRR6 (APRR6), found in Arabidopsis thaliana (Mouse-ear cress).